The sequence spans 465 residues: GTPase Der (465 aa).

2 consecutive EngA-type G domains span residues 3–167 and 179–352; these read PLVA…PERS and IHIA…VSAL. GTP-binding positions include 9 to 16, 57 to 61, 119 to 122, 185 to 192, 232 to 236, and 297 to 300; these read GRPNVGKS, DTGGM, NKID, DTAGL, and NKWD. In terms of domain architecture, KH-like spans 353–437; sequence RQFSTSEVNK…PVRFLFREGD (85 aa).

It belongs to the TRAFAC class TrmE-Era-EngA-EngB-Septin-like GTPase superfamily. EngA (Der) GTPase family. Associates with the 50S ribosomal subunit.

GTPase that plays an essential role in the late steps of ribosome biogenesis. In Xylella fastidiosa (strain M23), this protein is GTPase Der.